A 186-amino-acid chain; its full sequence is Large ribosomal subunit protein uL5 (186 aa).

This sequence belongs to the universal ribosomal protein uL5 family. Part of the 50S ribosomal subunit; part of the 5S rRNA/L5/L18/L25 subcomplex. Contacts the 5S rRNA and the P site tRNA. Forms a bridge to the 30S subunit in the 70S ribosome.

In terms of biological role, this is one of the proteins that bind and probably mediate the attachment of the 5S RNA into the large ribosomal subunit, where it forms part of the central protuberance. In the 70S ribosome it contacts protein S13 of the 30S subunit (bridge B1b), connecting the 2 subunits; this bridge is implicated in subunit movement. Contacts the P site tRNA; the 5S rRNA and some of its associated proteins might help stabilize positioning of ribosome-bound tRNAs. In Jannaschia sp. (strain CCS1), this protein is Large ribosomal subunit protein uL5.